A 137-amino-acid polypeptide reads, in one-letter code: Basic phospholipase A2 PeBP(R)-I/II (137 aa).

A signal peptide spans 1–16 (MRTLWIMAVLLLGVEG). Disulfide bonds link cysteine 42–cysteine 131, cysteine 44–cysteine 60, cysteine 59–cysteine 111, cysteine 65–cysteine 137, cysteine 66–cysteine 104, cysteine 73–cysteine 97, and cysteine 91–cysteine 102. Histidine 63 is a catalytic residue. Aspartate 105 is an active-site residue.

Belongs to the phospholipase A2 family. Group II subfamily. R49 sub-subfamily. As to expression, expressed by the venom gland.

It is found in the secreted. The catalysed reaction is a 1,2-diacyl-sn-glycero-3-phosphocholine + H2O = a 1-acyl-sn-glycero-3-phosphocholine + a fatty acid + H(+). Snake venom phospholipases A2 that have myotoxic, and edema-inducing activity, as well as extremely weak lipolytic activity. PLA2 catalyzes the calcium-dependent hydrolysis of the 2-acyl groups in 3-sn-phosphoglycerides. The protein is Basic phospholipase A2 PeBP(R)-I/II of Protobothrops elegans (Elegant pitviper).